Here is a 273-residue protein sequence, read N- to C-terminus: Putative expansin-B2 (273 aa).

An N-terminal signal peptide occupies residues 1–29 (MTILVVDRYYMLMNLLFALTCLLLNLTHC). Residue asparagine 36 is glycosylated (N-linked (GlcNAc...) asparagine). The Expansin-like EG45 domain occupies 65–173 (GGACGYGNAV…KKVECNYIGK (109 aa)). 3 disulfides stabilise this stretch: cysteine 68/cysteine 97, cysteine 100/cysteine 168, and cysteine 105/cysteine 111. The Expansin-like CBD domain maps to 186-269 (NSFAVLVAYV…NWQPGAIYKS (84 aa)).

Belongs to the expansin family. Expansin B subfamily.

The protein localises to the secreted. Its subcellular location is the cell wall. The protein resides in the membrane. Functionally, may cause loosening and extension of plant cell walls by disrupting non-covalent bonding between cellulose microfibrils and matrix glucans. No enzymatic activity has been found. The protein is Putative expansin-B2 (EXPB2) of Arabidopsis thaliana (Mouse-ear cress).